Here is a 435-residue protein sequence, read N- to C-terminus: Methylenetetrahydrofolate--tRNA-(uracil-5-)-methyltransferase TrmFO (435 aa).

7–12 (GAGLAG) serves as a coordination point for FAD.

Belongs to the MnmG family. TrmFO subfamily. Requires FAD as cofactor.

The protein localises to the cytoplasm. The enzyme catalyses uridine(54) in tRNA + (6R)-5,10-methylene-5,6,7,8-tetrahydrofolate + NADH + H(+) = 5-methyluridine(54) in tRNA + (6S)-5,6,7,8-tetrahydrofolate + NAD(+). The catalysed reaction is uridine(54) in tRNA + (6R)-5,10-methylene-5,6,7,8-tetrahydrofolate + NADPH + H(+) = 5-methyluridine(54) in tRNA + (6S)-5,6,7,8-tetrahydrofolate + NADP(+). Its function is as follows. Catalyzes the folate-dependent formation of 5-methyl-uridine at position 54 (M-5-U54) in all tRNAs. In Thermotoga petrophila (strain ATCC BAA-488 / DSM 13995 / JCM 10881 / RKU-1), this protein is Methylenetetrahydrofolate--tRNA-(uracil-5-)-methyltransferase TrmFO.